Consider the following 154-residue polypeptide: Putative peroxiredoxin MT1643 (154 aa).

Positions 1-153 (MKTGDTVADF…ALATLRAIRS (153 aa)) constitute a Thioredoxin domain. Residue cysteine 44 is the Cysteine sulfenic acid (-SOH) intermediate of the active site. Cysteine 44 and cysteine 49 are oxidised to a cystine.

Belongs to the peroxiredoxin family. BCP/PrxQ subfamily. Monomer.

It carries out the reaction a hydroperoxide + [thioredoxin]-dithiol = an alcohol + [thioredoxin]-disulfide + H2O. Its function is as follows. Thiol-specific peroxidase that catalyzes the reduction of hydrogen peroxide and organic hydroperoxides to water and alcohols, respectively. Plays a role in cell protection against oxidative stress by detoxifying peroxides and as sensor of hydrogen peroxide-mediated signaling events. This Mycobacterium tuberculosis (strain CDC 1551 / Oshkosh) protein is Putative peroxiredoxin MT1643 (bcpB).